Reading from the N-terminus, the 193-residue chain is Flagellar transcriptional regulator FlhC (193 aa).

Residues cysteine 137, cysteine 140, cysteine 158, and cysteine 161 each coordinate Zn(2+).

The protein belongs to the FlhC family. As to quaternary structure, heterohexamer composed of two FlhC and four FlhD subunits. Each FlhC binds a FlhD dimer, forming a heterotrimer, and a hexamer assembles by dimerization of two heterotrimers. Zn(2+) serves as cofactor.

Its subcellular location is the cytoplasm. Its function is as follows. Functions in complex with FlhD as a master transcriptional regulator that regulates transcription of several flagellar and non-flagellar operons by binding to their promoter region. Activates expression of class 2 flagellar genes, including fliA, which is a flagellum-specific sigma factor that turns on the class 3 genes. Also regulates genes whose products function in a variety of physiological pathways. This is Flagellar transcriptional regulator FlhC from Pectobacterium carotovorum (Erwinia carotovora).